A 507-amino-acid chain; its full sequence is ATP synthase subunit alpha, chloroplastic (507 aa).

Gly-170–Thr-177 serves as a coordination point for ATP.

It belongs to the ATPase alpha/beta chains family. In terms of assembly, F-type ATPases have 2 components, CF(1) - the catalytic core - and CF(0) - the membrane proton channel. CF(1) has five subunits: alpha(3), beta(3), gamma(1), delta(1), epsilon(1). CF(0) has four main subunits: a, b, b' and c.

The protein resides in the plastid. Its subcellular location is the chloroplast thylakoid membrane. It catalyses the reaction ATP + H2O + 4 H(+)(in) = ADP + phosphate + 5 H(+)(out). Functionally, produces ATP from ADP in the presence of a proton gradient across the membrane. The alpha chain is a regulatory subunit. The chain is ATP synthase subunit alpha, chloroplastic from Sorghum bicolor (Sorghum).